A 304-amino-acid polypeptide reads, in one-letter code: Non-specific ribonucleoside hydrolase RihC (304 aa).

The active site involves His233.

It belongs to the IUNH family. RihC subfamily.

Functionally, hydrolyzes both purine and pyrimidine ribonucleosides with a broad-substrate specificity. The sequence is that of Non-specific ribonucleoside hydrolase RihC from Shigella flexneri serotype 5b (strain 8401).